Consider the following 276-residue polypeptide: 3-methyl-2-oxobutanoate hydroxymethyltransferase (276 aa).

Mg(2+) contacts are provided by Asp-45 and Asp-84. Residues 45–46, Asp-84, and Lys-114 each bind 3-methyl-2-oxobutanoate; that span reads DS. Glu-116 provides a ligand contact to Mg(2+). Glu-183 functions as the Proton acceptor in the catalytic mechanism.

This sequence belongs to the PanB family. In terms of assembly, homodecamer; pentamer of dimers. Mg(2+) serves as cofactor.

Its subcellular location is the cytoplasm. It carries out the reaction 3-methyl-2-oxobutanoate + (6R)-5,10-methylene-5,6,7,8-tetrahydrofolate + H2O = 2-dehydropantoate + (6S)-5,6,7,8-tetrahydrofolate. Its pathway is cofactor biosynthesis; (R)-pantothenate biosynthesis; (R)-pantoate from 3-methyl-2-oxobutanoate: step 1/2. In terms of biological role, catalyzes the reversible reaction in which hydroxymethyl group from 5,10-methylenetetrahydrofolate is transferred onto alpha-ketoisovalerate to form ketopantoate. This is 3-methyl-2-oxobutanoate hydroxymethyltransferase from Carboxydothermus hydrogenoformans (strain ATCC BAA-161 / DSM 6008 / Z-2901).